The following is a 219-amino-acid chain: UPF0173 metal-dependent hydrolase Mlab_1154 (219 aa).

The protein belongs to the UPF0173 family.

The protein is UPF0173 metal-dependent hydrolase Mlab_1154 of Methanocorpusculum labreanum (strain ATCC 43576 / DSM 4855 / Z).